The chain runs to 1265 residues: Protein diaphanous homolog 1 (1265 aa).

Met-1 carries the post-translational modification N-acetylmethionine. A compositionally biased stretch (gly residues) spans 1-12 (MEPSGGGLGPGR). Disordered stretches follow at residues 1–42 (MEPS…FTLK) and 54–83 (SMRI…TAQS). Residue Ser-22 is modified to Phosphoserine. Residues 54-65 (SMRIKKEKEKPN) show a composition bias toward basic and acidic residues. Residues 67–83 (AHRNSSASYGDDPTAQS) show a composition bias toward polar residues. Positions 84–449 (LQDISDDQVL…QIVLHKNGTD (366 aa)) constitute a GBD/FH3 domain. Positions 474-568 (VEKSEAKATE…KKEMASLSAV (95 aa)) form a coiled coil. The tract at residues 573-742 (SVSSSAAVPQ…PPPPGMGVPP (170 aa)) is disordered. 2 stretches are compositionally biased toward pro residues: residues 594–628 (IPPP…PPLP) and 645–742 (IPPP…GVPP). The region spanning 625-757 (PPLPGGACIS…FGIPAAPVLP (133 aa)) is the FH1 domain. Thr-761 bears the Phosphothreonine mark. An FH2 domain is found at 762–1164 (PKKVYKPEVQ…MRRAKLAKEK (403 aa)). N6-acetyllysine occurs at positions 1050 and 1096. Residue Tyr-1114 is modified to Phosphotyrosine. A coiled-coil region spans residues 1141–1185 (AVKENQKRRETEEKMRRAKLAKEKAEKERLEKQQKREQLIDMNAE). Residues 1187–1215 (DETGVMDSLLEALQSGAAFRRKRGPRQVN) enclose the DAD domain. Ser-1247 carries the post-translational modification Phosphoserine.

This sequence belongs to the formin homology family. Diaphanous subfamily. As to quaternary structure, homodimer. Interacts with the GTP-bound form of RHOA. Interacts with RHOC, PFY1, MAPRE1, BAIAP2 and APC. Interacts with SCAI. Interacts with DCAF7, via FH2 domain. Interacts with NCDN. Interacts with OSBPL10, OSBPL2, VIM, TUBB and DYN1. Phosphorylation at Thr-761 is stimulated by cAMP and regulates stability, complex formation and mitochondrial movement. In terms of tissue distribution, expressed in testis. Present in Sertoli cells (at protein level).

It is found in the cell membrane. The protein localises to the cell projection. Its subcellular location is the ruffle membrane. It localises to the cytoplasm. The protein resides in the cytoskeleton. It is found in the microtubule organizing center. The protein localises to the centrosome. Its subcellular location is the spindle. It localises to the nucleus. Its function is as follows. Actin nucleation and elongation factor required for the assembly of F-actin structures, such as actin cables and stress fibers. Binds to the barbed end of the actin filament and slows down actin polymerization and depolymerization. Required for cytokinesis, and transcriptional activation of the serum response factor. DFR proteins couple Rho and Src tyrosine kinase during signaling and the regulation of actin dynamics. Functions as a scaffold protein for MAPRE1 and APC to stabilize microtubules and promote cell migration. Has neurite outgrowth promoting activity. Acts in a Rho-dependent manner to recruit PFY1 to the membrane. The MEMO1-RHOA-DIAPH1 signaling pathway plays an important role in ERBB2-dependent stabilization of microtubules at the cell cortex. It controls the localization of APC and CLASP2 to the cell membrane, via the regulation of GSK3B activity. In turn, membrane-bound APC allows the localization of the MACF1 to the cell membrane, which is required for microtubule capture and stabilization. Plays a role in the regulation of cell morphology and cytoskeletal organization. Required in the control of cell shape. Also acts as an actin nucleation and elongation factor in the nucleus by promoting nuclear actin polymerization inside the nucleus to drive serum-dependent SRF-MRTFA activity. The chain is Protein diaphanous homolog 1 from Rattus norvegicus (Rat).